Consider the following 506-residue polypeptide: Beta-glucosidase 13 (506 aa).

An N-terminal signal peptide occupies residues 1-25 (MAAAGEVVMLGGILLPLLLVVAVSG). Residue glutamine 49 coordinates a beta-D-glucoside. Asparagine 118 carries an N-linked (GlcNAc...) asparagine glycan. Residues histidine 153 and 198-199 (NE) contribute to the a beta-D-glucoside site. The Proton donor role is filled by glutamate 199. A disulfide bond links cysteine 219 and cysteine 226. Residue asparagine 225 is glycosylated (N-linked (GlcNAc...) asparagine). Tyrosine 342 contributes to the a beta-D-glucoside binding site. Asparagine 357 and asparagine 367 each carry an N-linked (GlcNAc...) asparagine glycan. Glutamate 413 serves as a coordination point for a beta-D-glucoside. Glutamate 413 serves as the catalytic Nucleophile. Asparagine 421 is a glycosylation site (N-linked (GlcNAc...) asparagine). A beta-D-glucoside is bound by residues tryptophan 462, 469 to 470 (EW), and phenylalanine 478.

The protein belongs to the glycosyl hydrolase 1 family.

It catalyses the reaction Hydrolysis of terminal, non-reducing beta-D-glucosyl residues with release of beta-D-glucose.. The polypeptide is Beta-glucosidase 13 (BGLU13) (Oryza sativa subsp. japonica (Rice)).